Here is an 83-residue protein sequence, read N- to C-terminus: MYB-like transcription factor ETC1 (83 aa).

The Myb-like domain maps to 35–72; that stretch reads AQEEEDLICRMYKLVGERWDLIAGRIPGRTAEEIERFW.

In terms of tissue distribution, expressed in developing trichomes and non-root hair cells.

The protein resides in the nucleus. Its function is as follows. MYB-type transcription factor involved in epidermal cell fate specification. Acts as a negative regulator of trichome development, by mediating lateral inhibition. Promotes the formation of hair developing cells in H position in root epidermis, probably by inhibiting non-hair cell formation. The polypeptide is MYB-like transcription factor ETC1 (ETC1) (Arabidopsis thaliana (Mouse-ear cress)).